Consider the following 406-residue polypeptide: Glycosyltransferase GlyE (406 aa).

The interval 3 to 265 is GT8 domain; that stretch reads NTKRAVVFAG…SVILNEWFSK (263 aa). UDP-binding positions include 11–16 and 106–107; these read AGDYAY and DS. Mn(2+)-binding residues include D106, D108, and H227. 227–233 provides a ligand contact to UDP; sequence HYISQDK.

This sequence in the N-terminal section; belongs to the glycosyltransferase 8 family. The cofactor is Mn(2+).

The protein operates within protein modification; protein glycosylation. Involved in the polymorphic O-glycosylation of the serine-rich repeat protein PsrP. Catalyzes the third step in glycosylation of PsrP in this bacteria. Transfers galactose from UDP-galactose to the terminal glucose moiety of already-glycosylated PsrP (using the short substrate PsrP-GlcNAc-Glc). Has a very marked preference for PsrP substrate that has already been modified by GlcNAc and glucose. Has hydrolytic activity against UDP-galactose but none against UDP-glucose. In terms of biological role, also catalyzes the fourth step in glycosylation of PsrP in this bacteria. Can transfer the sugar from UDP-galactose to the terminal sugar moiety of PsrP-GlcNAc-Glc-Glc and of PsrP-GlcNAc-Glc-Gal. The chain is Glycosyltransferase GlyE from Streptococcus pneumoniae serotype 4 (strain ATCC BAA-334 / TIGR4).